Here is a 286-residue protein sequence, read N- to C-terminus: D-tagatose-1,6-bisphosphate aldolase subunit KbaY (286 aa).

The active-site Proton donor is the Asp-82. 2 residues coordinate Zn(2+): His-83 and His-180. Gly-181 serves as a coordination point for dihydroxyacetone phosphate. His-208 serves as a coordination point for Zn(2+). Dihydroxyacetone phosphate contacts are provided by residues 209–211 (GAS) and 230–233 (NVAT).

The protein belongs to the class II fructose-bisphosphate aldolase family. TagBP aldolase KbaY subfamily. As to quaternary structure, homotetramer. Forms a complex with KbaZ. The cofactor is Zn(2+).

It carries out the reaction D-tagatofuranose 1,6-bisphosphate = D-glyceraldehyde 3-phosphate + dihydroxyacetone phosphate. Its pathway is carbohydrate metabolism; D-tagatose 6-phosphate degradation; D-glyceraldehyde 3-phosphate and glycerone phosphate from D-tagatose 6-phosphate: step 2/2. Functionally, catalytic subunit of the tagatose-1,6-bisphosphate aldolase KbaYZ, which catalyzes the reversible aldol condensation of dihydroxyacetone phosphate (DHAP or glycerone-phosphate) with glyceraldehyde 3-phosphate (G3P) to produce tagatose 1,6-bisphosphate (TBP). Requires KbaZ subunit for full activity and stability. The chain is D-tagatose-1,6-bisphosphate aldolase subunit KbaY from Escherichia coli O127:H6 (strain E2348/69 / EPEC).